The sequence spans 146 residues: UPF0178 protein BCQ_2874 (146 aa).

This sequence belongs to the UPF0178 family.

This Bacillus cereus (strain Q1) protein is UPF0178 protein BCQ_2874.